Consider the following 202-residue polypeptide: LexA repressor (202 aa).

A DNA-binding region (H-T-H motif) is located at residues 28 to 48 (RAEIAQELGFKSPNAAEEHLK). Residues Ser123 and Lys160 each act as for autocatalytic cleavage activity in the active site.

The protein belongs to the peptidase S24 family. In terms of assembly, homodimer.

It carries out the reaction Hydrolysis of Ala-|-Gly bond in repressor LexA.. Represses a number of genes involved in the response to DNA damage (SOS response), including recA and lexA. In the presence of single-stranded DNA, RecA interacts with LexA causing an autocatalytic cleavage which disrupts the DNA-binding part of LexA, leading to derepression of the SOS regulon and eventually DNA repair. This is LexA repressor from Pseudomonas putida (Arthrobacter siderocapsulatus).